The sequence spans 335 residues: tRNA N6-adenosine threonylcarbamoyltransferase (335 aa).

Fe cation contacts are provided by His-111 and His-115. Substrate-binding positions include 133–137, Asp-166, Gly-179, and Asn-276; that span reads LISGG. Fe cation is bound at residue Asp-301.

This sequence belongs to the KAE1 / TsaD family. Fe(2+) serves as cofactor.

The protein resides in the cytoplasm. It carries out the reaction L-threonylcarbamoyladenylate + adenosine(37) in tRNA = N(6)-L-threonylcarbamoyladenosine(37) in tRNA + AMP + H(+). Required for the formation of a threonylcarbamoyl group on adenosine at position 37 (t(6)A37) in tRNAs that read codons beginning with adenine. Is involved in the transfer of the threonylcarbamoyl moiety of threonylcarbamoyl-AMP (TC-AMP) to the N6 group of A37, together with TsaE and TsaB. TsaD likely plays a direct catalytic role in this reaction. The polypeptide is tRNA N6-adenosine threonylcarbamoyltransferase (Wolbachia pipientis wMel).